The chain runs to 358 residues: Alanine racemase (358 aa).

Residue lysine 35 is the Proton acceptor; specific for D-alanine of the active site. Lysine 35 carries the post-translational modification N6-(pyridoxal phosphate)lysine. Residue arginine 130 participates in substrate binding. The active-site Proton acceptor; specific for L-alanine is the tyrosine 255. Methionine 303 lines the substrate pocket.

The protein belongs to the alanine racemase family. Pyridoxal 5'-phosphate serves as cofactor.

The catalysed reaction is L-alanine = D-alanine. It functions in the pathway amino-acid biosynthesis; D-alanine biosynthesis; D-alanine from L-alanine: step 1/1. Functionally, catalyzes the interconversion of L-alanine and D-alanine. May also act on other amino acids. The sequence is that of Alanine racemase (alr) from Shewanella oneidensis (strain ATCC 700550 / JCM 31522 / CIP 106686 / LMG 19005 / NCIMB 14063 / MR-1).